Here is a 78-residue protein sequence, read N- to C-terminus: Putative antitoxin PF1222 (78 aa).

It belongs to the UPF0330 family.

In terms of biological role, possibly the antitoxin component of a type II toxin-antitoxin (TA) system. This Pyrococcus furiosus (strain ATCC 43587 / DSM 3638 / JCM 8422 / Vc1) protein is Putative antitoxin PF1222.